A 289-amino-acid chain; its full sequence is Xylosylprotein 4-beta-galactosyltransferase (289 aa).

Over methionine 1–arginine 6 the chain is Cytoplasmic. A helical; Signal-anchor for type II membrane protein membrane pass occupies residues leucine 7 to valine 27. The Lumenal portion of the chain corresponds to leucine 28–serine 289. Residue proline 58 to arginine 62 participates in UDP-alpha-D-galactose binding. N-linked (GlcNAc...) asparagine glycosylation is found at asparagine 81 and asparagine 90. Residues phenylalanine 97–arginine 99, valine 123–aspartate 124, tyrosine 154, and tryptophan 184 contribute to the UDP-alpha-D-galactose site. Aspartate 124 contributes to the Mn(2+) binding site. Leucine 186–aspartate 189 is an N-acetyl-D-glucosamine binding site. A glycan (N-linked (GlcNAc...) asparagine) is linked at asparagine 201. Positions asparagine 214–asparagine 236 are disordered. The segment covering arginine 217–arginine 226 has biased composition (basic residues). Histidine 218 provides a ligand contact to Mn(2+). Position 218–220 (histidine 218–histidine 220) interacts with UDP-alpha-D-galactose. Positions aspartate 227 to asparagine 236 are enriched in basic and acidic residues.

The protein belongs to the glycosyltransferase 7 family. The cofactor is Mn(2+).

It is found in the membrane. The catalysed reaction is 3-O-(beta-D-xylosyl)-L-seryl-[protein] + UDP-alpha-D-galactose = 3-O-(beta-D-galactosyl-(1-&gt;4)-beta-D-xylosyl)-L-seryl-[protein] + UDP + H(+). It participates in protein modification; protein glycosylation. Its function is as follows. Glycosyltransferase required for the biosynthesis of the tetrasaccharide (GlcA-Gal-Gal-Xyl-)Ser core linker of heparan sulfate and chondroitin sulfate. Required for embryonic development. Involved in vulval epithelium invagination. Required for axon regeneration after injury. The sequence is that of Xylosylprotein 4-beta-galactosyltransferase (sqv-3) from Caenorhabditis elegans.